The primary structure comprises 227 residues: Cytochrome c oxidase subunit 2 (227 aa).

Over 1–14 (MAYPFELGFQDATS) the chain is Mitochondrial intermembrane. A helical membrane pass occupies residues 15–45 (PIMEELLHFHDHTLMIVFLISSLVLYIISLM). At 46–59 (LTTKLTHTSTMDAQ) the chain is on the mitochondrial matrix side. Residues 60 to 87 (EVETIWTILPAIILILIALPSLRILYMM) traverse the membrane as a helical segment. The Mitochondrial intermembrane segment spans residues 88–227 (DEINDPSLTV…HFENWSSSML (140 aa)). Positions 161, 196, 198, 200, 204, and 207 each coordinate Cu cation. Position 198 (Glu198) interacts with Mg(2+).

Belongs to the cytochrome c oxidase subunit 2 family. Component of the cytochrome c oxidase (complex IV, CIV), a multisubunit enzyme composed of 14 subunits. The complex is composed of a catalytic core of 3 subunits MT-CO1, MT-CO2 and MT-CO3, encoded in the mitochondrial DNA, and 11 supernumerary subunits COX4I, COX5A, COX5B, COX6A, COX6B, COX6C, COX7A, COX7B, COX7C, COX8 and NDUFA4, which are encoded in the nuclear genome. The complex exists as a monomer or a dimer and forms supercomplexes (SCs) in the inner mitochondrial membrane with NADH-ubiquinone oxidoreductase (complex I, CI) and ubiquinol-cytochrome c oxidoreductase (cytochrome b-c1 complex, complex III, CIII), resulting in different assemblies (supercomplex SCI(1)III(2)IV(1) and megacomplex MCI(2)III(2)IV(2)). Found in a complex with TMEM177, COA6, COX18, COX20, SCO1 and SCO2. Interacts with TMEM177 in a COX20-dependent manner. Interacts with COX20. Interacts with COX16. Requires Cu cation as cofactor.

The protein resides in the mitochondrion inner membrane. It carries out the reaction 4 Fe(II)-[cytochrome c] + O2 + 8 H(+)(in) = 4 Fe(III)-[cytochrome c] + 2 H2O + 4 H(+)(out). Its function is as follows. Component of the cytochrome c oxidase, the last enzyme in the mitochondrial electron transport chain which drives oxidative phosphorylation. The respiratory chain contains 3 multisubunit complexes succinate dehydrogenase (complex II, CII), ubiquinol-cytochrome c oxidoreductase (cytochrome b-c1 complex, complex III, CIII) and cytochrome c oxidase (complex IV, CIV), that cooperate to transfer electrons derived from NADH and succinate to molecular oxygen, creating an electrochemical gradient over the inner membrane that drives transmembrane transport and the ATP synthase. Cytochrome c oxidase is the component of the respiratory chain that catalyzes the reduction of oxygen to water. Electrons originating from reduced cytochrome c in the intermembrane space (IMS) are transferred via the dinuclear copper A center (CU(A)) of subunit 2 and heme A of subunit 1 to the active site in subunit 1, a binuclear center (BNC) formed by heme A3 and copper B (CU(B)). The BNC reduces molecular oxygen to 2 water molecules using 4 electrons from cytochrome c in the IMS and 4 protons from the mitochondrial matrix. This chain is Cytochrome c oxidase subunit 2 (MT-CO2), found in Tamias merriami (Merriam's chipmunk).